Consider the following 460-residue polypeptide: Adenylyltransferase and sulfurtransferase MOCS3 (460 aa).

ATP contacts are provided by residues Gly92, Asp113, 120–124 (SNLAR), Lys137, and 181–182 (DN). The segment at 158–238 (PRALAEDWAL…RPPPPETVTN (81 aa)) is interaction with NFS1. Residues Cys222 and Cys225 each coordinate Zn(2+). Catalysis depends on Cys239, which acts as the Glycyl thioester intermediate; for adenylyltransferase activity. Cys297 and Cys300 together coordinate Zn(2+). Residues Cys316 and Cys324 are joined by a disulfide bond. Residues 347–458 (SGAPHVLLDV…WAAKIDGTFP (112 aa)) enclose the Rhodanese domain. Residue Cys412 is the Cysteine persulfide intermediate; for sulfurtransferase activity of the active site. Cys412 is modified (cysteine persulfide).

This sequence in the N-terminal section; belongs to the HesA/MoeB/ThiF family. UBA4 subfamily. Interacts with NFS1. It depends on Zn(2+) as a cofactor.

It is found in the cytoplasm. The protein localises to the cytosol. It catalyses the reaction [molybdopterin-synthase sulfur-carrier protein]-C-terminal Gly-Gly + ATP + H(+) = [molybdopterin-synthase sulfur-carrier protein]-C-terminal Gly-Gly-AMP + diphosphate. The catalysed reaction is [molybdopterin-synthase sulfur-carrier protein]-C-terminal Gly-Gly-AMP + S-sulfanyl-L-cysteinyl-[cysteine desulfurase] + AH2 = [molybdopterin-synthase sulfur-carrier protein]-C-terminal-Gly-aminoethanethioate + L-cysteinyl-[cysteine desulfurase] + A + AMP + 2 H(+). The protein operates within tRNA modification; 5-methoxycarbonylmethyl-2-thiouridine-tRNA biosynthesis. It functions in the pathway cofactor biosynthesis; molybdopterin biosynthesis. In terms of biological role, plays a central role in 2-thiolation of mcm(5)S(2)U at tRNA wobble positions of cytosolic tRNA(Lys), tRNA(Glu) and tRNA(Gln). Also essential during biosynthesis of the molybdenum cofactor. Acts by mediating the C-terminal thiocarboxylation of sulfur carriers URM1 and MOCS2A. Its N-terminus first activates URM1 and MOCS2A as acyl-adenylates (-COAMP), then the persulfide sulfur on the catalytic cysteine is transferred to URM1 and MOCS2A to form thiocarboxylation (-COSH) of their C-terminus. The reaction probably involves hydrogen sulfide that is generated from the persulfide intermediate and that acts as a nucleophile towards URM1 and MOCS2A. Subsequently, a transient disulfide bond is formed. Does not use thiosulfate as sulfur donor; NFS1 acting as a sulfur donor for thiocarboxylation reactions. The sequence is that of Adenylyltransferase and sulfurtransferase MOCS3 (Mocs3) from Mus musculus (Mouse).